The chain runs to 502 residues: Cytochrome P450 71A1 (502 aa).

Residues 7–21 form a helical membrane-spanning segment; it reads LLFLAIALTFFLLKL. A heme-binding site is contributed by Cys-443.

This sequence belongs to the cytochrome P450 family. Heme is required as a cofactor. In terms of tissue distribution, mesocarp.

The protein localises to the microsome membrane. It localises to the endoplasmic reticulum membrane. Functionally, involved in the metabolism of compounds associated with the development of flavor in the ripening fruit process, possibly by acting as trans-cinnamic acid 4-hydrolase. The chain is Cytochrome P450 71A1 (CYP71A1) from Persea americana (Avocado).